Here is a 172-residue protein sequence, read N- to C-terminus: Gastrula zinc finger protein XlCGF51.1A (172 aa).

C2H2-type zinc fingers lie at residues 6–28 (FSCS…NKIH), 34–56 (LICS…QRSH), 62–84 (FSCT…QRTH), 90–112 (FSCT…MLKH), 122–144 (LDCS…RKSH), and 150–172 (LQCS…QRVH).

It belongs to the krueppel C2H2-type zinc-finger protein family.

The protein localises to the nucleus. Functionally, may be involved in transcriptional regulation. This is Gastrula zinc finger protein XlCGF51.1A from Xenopus laevis (African clawed frog).